The sequence spans 429 residues: Ribosomal RNA small subunit methyltransferase B (429 aa).

Residues 254–260, Asp277, Asp303, and Asp322 contribute to the S-adenosyl-L-methionine site; that span reads CAAPGGK. Cys375 serves as the catalytic Nucleophile.

Belongs to the class I-like SAM-binding methyltransferase superfamily. RsmB/NOP family.

The protein resides in the cytoplasm. It catalyses the reaction cytidine(967) in 16S rRNA + S-adenosyl-L-methionine = 5-methylcytidine(967) in 16S rRNA + S-adenosyl-L-homocysteine + H(+). In terms of biological role, specifically methylates the cytosine at position 967 (m5C967) of 16S rRNA. The sequence is that of Ribosomal RNA small subunit methyltransferase B from Salmonella arizonae (strain ATCC BAA-731 / CDC346-86 / RSK2980).